The following is a 452-amino-acid chain: UDP-N-acetylmuramoylalanine--D-glutamate ligase (452 aa).

119–125 lines the ATP pocket; it reads GSNGKTT.

Belongs to the MurCDEF family.

The protein localises to the cytoplasm. It catalyses the reaction UDP-N-acetyl-alpha-D-muramoyl-L-alanine + D-glutamate + ATP = UDP-N-acetyl-alpha-D-muramoyl-L-alanyl-D-glutamate + ADP + phosphate + H(+). Its pathway is cell wall biogenesis; peptidoglycan biosynthesis. Its function is as follows. Cell wall formation. Catalyzes the addition of glutamate to the nucleotide precursor UDP-N-acetylmuramoyl-L-alanine (UMA). This is UDP-N-acetylmuramoylalanine--D-glutamate ligase from Streptococcus equi subsp. zooepidemicus (strain MGCS10565).